Here is a 368-residue protein sequence, read N- to C-terminus: Phospho-N-acetylmuramoyl-pentapeptide-transferase (368 aa).

The next 9 membrane-spanning stretches (helical) occupy residues 30 to 50, 72 to 92, 98 to 118, 139 to 159, 170 to 190, 208 to 228, 238 to 258, 264 to 286, and 345 to 365; these read AAAI…IRYL, LPTM…LLWS, HVWL…IDDY, VALG…SVLM, LTID…TALS, AIVV…VYAT, GGEI…FLWF, EIFM…ALLI, and KIVI…LMTL.

Belongs to the glycosyltransferase 4 family. MraY subfamily. Mg(2+) serves as cofactor.

It localises to the cell inner membrane. The catalysed reaction is UDP-N-acetyl-alpha-D-muramoyl-L-alanyl-gamma-D-glutamyl-meso-2,6-diaminopimeloyl-D-alanyl-D-alanine + di-trans,octa-cis-undecaprenyl phosphate = di-trans,octa-cis-undecaprenyl diphospho-N-acetyl-alpha-D-muramoyl-L-alanyl-D-glutamyl-meso-2,6-diaminopimeloyl-D-alanyl-D-alanine + UMP. It participates in cell wall biogenesis; peptidoglycan biosynthesis. Catalyzes the initial step of the lipid cycle reactions in the biosynthesis of the cell wall peptidoglycan: transfers peptidoglycan precursor phospho-MurNAc-pentapeptide from UDP-MurNAc-pentapeptide onto the lipid carrier undecaprenyl phosphate, yielding undecaprenyl-pyrophosphoryl-MurNAc-pentapeptide, known as lipid I. The protein is Phospho-N-acetylmuramoyl-pentapeptide-transferase of Chlorobium luteolum (strain DSM 273 / BCRC 81028 / 2530) (Pelodictyon luteolum).